Here is a 265-residue protein sequence, read N- to C-terminus: MAALIRNLGARAAVAALSAKHVVPAAGSTALRMASTTPVEPKKADKPTVRQPDAVARSHLSDFGRYVAECLPKYVQKVQLTAGDELEVLIAPEGVVPVLQFLKDHHQAQFTNLVDIAGVDVPCRKNRFEVVYNLLSLRYNSRIRVKTYTDELTPLDSACEVHKAANWYEREIWDMYGVFFANHPDLRRILTDYGFEGHPQRRDFPLSGYVELRYDDEKKRVVCEPLELAQEFRKFDLSAPWEQFPNFRNANPPAEVVPPQAPAKK.

The N-terminal 33 residues, 1 to 33 (MAALIRNLGARAAVAALSAKHVVPAAGSTALRM), are a transit peptide targeting the mitochondrion.

The protein belongs to the complex I 30 kDa subunit family. In terms of assembly, part of the mitochondrial membrane respiratory chain NADH dehydrogenase (Complex I). Interacts with sicily; interaction is stronger with unprocessed sicily protein.

It localises to the mitochondrion. It carries out the reaction a ubiquinone + NADH + 5 H(+)(in) = a ubiquinol + NAD(+) + 4 H(+)(out). In terms of biological role, core subunit of the mitochondrial membrane respiratory chain NADH dehydrogenase (Complex I) that is believed to belong to the minimal assembly required for catalysis. Complex I functions in the transfer of electrons from NADH to the respiratory chain. The immediate electron acceptor for the enzyme is believed to be ubiquinone. This is NADH dehydrogenase [ubiquinone] iron-sulfur protein 3, mitochondrial from Drosophila melanogaster (Fruit fly).